A 355-amino-acid chain; its full sequence is uncharacterized protein (355 aa).

Cysteine 2 acts as the For GATase activity in catalysis. Residues 2–248 (CELLGICFNK…NGELMVFKNG (247 aa)) form the Glutamine amidotransferase type-2 domain.

This is an uncharacterized protein from Methanocaldococcus jannaschii (strain ATCC 43067 / DSM 2661 / JAL-1 / JCM 10045 / NBRC 100440) (Methanococcus jannaschii).